Consider the following 647-residue polypeptide: LIM domain kinase 1 (647 aa).

LIM zinc-binding domains are found at residues 25-75 (CASC…CKKD) and 84-137 (CHGC…CGHC). The PDZ domain occupies 165–258 (LVSIPASSHG…LLQLTLEHDP (94 aa)). At Ser-210 the chain carries Phosphoserine. At Thr-229 the chain carries Phosphothreonine. The disordered stretch occupies residues 260 to 319 (DTLGHGLGPETSPLSSPAYTPSGEAGSSARQKPVLRSCSIDRSPGAGSLGSPASQRKDLG). 4 positions are modified to phosphoserine: Ser-298, Ser-302, Ser-307, and Ser-310. The segment covering 302–313 (SPGAGSLGSPAS) has biased composition (low complexity). Ser-323 carries the post-translational modification Phosphoserine; by MAPKAPK2. Ser-337 is subject to Phosphoserine. The 266-residue stretch at 339–604 (LIHGEVLGKG…PSFVKLEHWL (266 aa)) folds into the Protein kinase domain. ATP contacts are provided by residues 345–353 (LGKGCFGQA) and Lys-368. Asp-460 is a catalytic residue. Thr-508 is modified (phosphothreonine; by ROCK1 and PAK1).

Belongs to the protein kinase superfamily. TKL Ser/Thr protein kinase family. In terms of assembly, interacts (via LIM domain) with the cytoplasmic domain of NRG1. Interacts with NISCH. Interacts with RLIM and RNF6. Self-associates to form homodimers. Interacts with HSP90AA1; this interaction promotes LIMK1 dimerization and subsequent transphosphorylation. Interacts with CDKN1C. Interacts with SSH1. Interacts with ROCK1. Interacts (via LIM zinc-binding domains) with FAM89B/LRAP25 (via LRR repeat). Forms a tripartite complex with CDC42BPA, CDC42BPB and FAM89B/LRAP25. In terms of processing, autophosphorylated. Phosphorylated on Thr-508 by ROCK1 and PAK1, resulting in activation. Phosphorylated by PAK4 which increases the ability of LIMK1 to phosphorylate cofilin. Phosphorylated at Ser-323 by MAPKAPK2 during activation of VEGFA-induced signaling, which results in activation of LIMK1 and promotion of actin reorganization, cell migration, and tubule formation of endothelial cells. Dephosphorylated and inactivated by SSH1. Phosphorylated by CDC42BP. Ubiquitinated. 'Lys-48'-linked polyubiquitination by RNF6 leads to proteasomal degradation through the 26S proteasome, modulating LIMK1 levels in the growth cone and its effect on axonal outgrowth. Also polyubiquitinated by RLIM. Highest expression in both adult and fetal nervous system. Detected ubiquitously throughout the different regions of adult brain, with highest levels in the cerebral cortex. Expressed to a lesser extent in heart and skeletal muscle.

It is found in the cytoplasm. Its subcellular location is the nucleus. The protein localises to the cytoskeleton. It localises to the cell projection. The protein resides in the lamellipodium. The catalysed reaction is L-seryl-[protein] + ATP = O-phospho-L-seryl-[protein] + ADP + H(+). It carries out the reaction L-threonyl-[protein] + ATP = O-phospho-L-threonyl-[protein] + ADP + H(+). Serine/threonine-protein kinase that plays an essential role in the regulation of actin filament dynamics. Acts downstream of several Rho family GTPase signal transduction pathways. Activated by upstream kinases including ROCK1, PAK1 and PAK4, which phosphorylate LIMK1 on a threonine residue located in its activation loop. LIMK1 subsequently phosphorylates and inactivates the actin binding/depolymerizing factors cofilin-1/CFL1, cofilin-2/CFL2 and destrin/DSTN, thereby preventing the cleavage of filamentous actin (F-actin), and stabilizing the actin cytoskeleton. In this way LIMK1 regulates several actin-dependent biological processes including cell motility, cell cycle progression, and differentiation. Phosphorylates TPPP on serine residues, thereby promoting microtubule disassembly. Stimulates axonal outgrowth and may be involved in brain development. In terms of biological role, has a dominant negative effect on actin cytoskeletal changes. Required for atypical chemokine receptor ACKR2-induced phosphorylation of cofilin (CFL1). This is LIM domain kinase 1 (LIMK1) from Homo sapiens (Human).